Here is a 226-residue protein sequence, read N- to C-terminus: Oxaloacetate tautomerase FAHD2, mitochondrial (226 aa).

Residues 1-30 (MAAAAQRLLAASTKIVGVGRNFVAHAKELG) constitute a mitochondrion transit peptide. Residues glutamate 69, glutamate 71, and aspartate 100 each coordinate Mg(2+).

Belongs to the FAH family. Mg(2+) serves as cofactor. Mn(2+) is required as a cofactor.

Its subcellular location is the mitochondrion. It catalyses the reaction oxaloacetate = enol-oxaloacetate. Functionally, tautomerase that converts enol-oxaloacetate, a strong inhibitor of succinate dehydrogenase, to the physiological keto form of oxaloacetate. This is Oxaloacetate tautomerase FAHD2, mitochondrial from Oryza sativa subsp. japonica (Rice).